Reading from the N-terminus, the 173-residue chain is NADH-ubiquinone oxidoreductase chain 6 (173 aa).

A run of 4 helical transmembrane segments spans residues 12-32 (VFWL…VSLV), 47-67 (GSFL…VIFA), 94-114 (VVLA…GECG), and 142-162 (GALM…LVLV).

Belongs to the complex I subunit 6 family.

The protein localises to the mitochondrion membrane. The catalysed reaction is a ubiquinone + NADH + 5 H(+)(in) = a ubiquinol + NAD(+) + 4 H(+)(out). Its function is as follows. Core subunit of the mitochondrial membrane respiratory chain NADH dehydrogenase (Complex I) that is believed to belong to the minimal assembly required for catalysis. Complex I functions in the transfer of electrons from NADH to the respiratory chain. The immediate electron acceptor for the enzyme is believed to be ubiquinone. This is NADH-ubiquinone oxidoreductase chain 6 (MT-ND6) from Pelomedusa subrufa (African side-necked turtle).